Consider the following 350-residue polypeptide: Uroporphyrinogen decarboxylase (350 aa).

Residues 23–27 (RQAGR), Asp73, Tyr150, Thr205, and His322 contribute to the substrate site.

This sequence belongs to the uroporphyrinogen decarboxylase family. Homodimer.

It localises to the cytoplasm. It catalyses the reaction uroporphyrinogen III + 4 H(+) = coproporphyrinogen III + 4 CO2. It participates in porphyrin-containing compound metabolism; protoporphyrin-IX biosynthesis; coproporphyrinogen-III from 5-aminolevulinate: step 4/4. Catalyzes the decarboxylation of four acetate groups of uroporphyrinogen-III to yield coproporphyrinogen-III. In Methylococcus capsulatus (strain ATCC 33009 / NCIMB 11132 / Bath), this protein is Uroporphyrinogen decarboxylase.